We begin with the raw amino-acid sequence, 537 residues long: CTP synthase (537 aa).

An amidoligase domain region spans residues 1–267 (MAKYIFVTGG…DEYVIKRLNL (267 aa)). S13 contacts CTP. S13 is a binding site for UTP. 14-19 (SLGKGI) is an ATP binding site. Position 54 (Y54) interacts with L-glutamine. D71 is a binding site for ATP. Mg(2+) contacts are provided by D71 and E141. Residues 148–150 (DIE), 188–193 (KTKPTQ), and K224 contribute to the CTP site. UTP-binding positions include 188 to 193 (KTKPTQ) and K224. 240–242 (RDV) is an ATP binding site. The region spanning 292–534 (EVALVGKYVD…VKAMLNLKIN (243 aa)) is the Glutamine amidotransferase type-1 domain. G354 provides a ligand contact to L-glutamine. Catalysis depends on C381, which acts as the Nucleophile; for glutamine hydrolysis. L-glutamine-binding positions include 382–385 (LGMQ), E405, and R462. Residues H507 and E509 contribute to the active site.

Belongs to the CTP synthase family. Homotetramer.

The catalysed reaction is UTP + L-glutamine + ATP + H2O = CTP + L-glutamate + ADP + phosphate + 2 H(+). It catalyses the reaction L-glutamine + H2O = L-glutamate + NH4(+). It carries out the reaction UTP + NH4(+) + ATP = CTP + ADP + phosphate + 2 H(+). Its pathway is pyrimidine metabolism; CTP biosynthesis via de novo pathway; CTP from UDP: step 2/2. With respect to regulation, allosterically activated by GTP, when glutamine is the substrate; GTP has no effect on the reaction when ammonia is the substrate. The allosteric effector GTP functions by stabilizing the protein conformation that binds the tetrahedral intermediate(s) formed during glutamine hydrolysis. Inhibited by the product CTP, via allosteric rather than competitive inhibition. Catalyzes the ATP-dependent amination of UTP to CTP with either L-glutamine or ammonia as the source of nitrogen. Regulates intracellular CTP levels through interactions with the four ribonucleotide triphosphates. This Caldanaerobacter subterraneus subsp. tengcongensis (strain DSM 15242 / JCM 11007 / NBRC 100824 / MB4) (Thermoanaerobacter tengcongensis) protein is CTP synthase.